The following is a 261-amino-acid chain: Transmembrane and immunoglobulin domain-containing protein 1 (261 aa).

The signal sequence occupies residues 1–27 (MAQKTSGLIQRCRFLLLMILFLPHVMT). An Ig-like C2-type 1 domain is found at 28–114 (SSVLSVNGKT…LQRNQSVSIS (87 aa)). Residues 28 to 219 (SSVLSVNGKT…IVKDKGSTVP (192 aa)) are Extracellular-facing. Cys-54 and Cys-103 are joined by a disulfide. N-linked (GlcNAc...) asparagine glycosylation is found at Asn-83, Asn-108, Asn-118, and Asn-189. An Ig-like C2-type 2 domain is found at 122–208 (PPLLSGNDFQ…LIETKTKDFH (87 aa)). Residues Cys-143 and Cys-194 are joined by a disulfide bond. A helical membrane pass occupies residues 220–240 (IEPIIAACVVVFLTLVFGVIA). The Cytoplasmic portion of the chain corresponds to 241–261 (RRKRIMKLCRKDQGPQCRTAL).

Homodimer. Post-translationally, N-glycosylated.

It is found in the cell membrane. The protein resides in the cytoplasm. In terms of biological role, may control cell-cell adhesion, cell migration and proliferation, cell morphology, and protects renal epithelial cells from oxidative cell injury to promote cell survival. The protein is Transmembrane and immunoglobulin domain-containing protein 1 of Bos taurus (Bovine).